The sequence spans 351 residues: Probable inactive tRNA-specific adenosine deaminase-like protein 3 (351 aa).

M1 carries the post-translational modification N-acetylmethionine. The disordered stretch occupies residues 1–26 (MEPAPGLVEQPKCLEAGSPEPEPAPW). A CMP/dCMP-type deaminase domain is found at 171–336 (AAMQSHMERA…PDLNHRFQVF (166 aa)). Positions 223, 291, and 294 each coordinate Zn(2+).

This sequence belongs to the cytidine and deoxycytidylate deaminase family. ADAT3 subfamily. The cofactor is Zn(2+).

This is Probable inactive tRNA-specific adenosine deaminase-like protein 3 (ADAT3) from Homo sapiens (Human).